The following is an 83-amino-acid chain: MKASMFLALAGLVLLFVVCYASESEEKEFPRELISKIFTVDDFKGEERECKGFGKSCVPGKNECCSGYACNSRDKWCKVLLGK.

The N-terminal stretch at 1 to 21 is a signal peptide; it reads MKASMFLALAGLVLLFVVCYA. Positions 22–48 are excised as a propeptide; sequence SESEEKEFPRELISKIFTVDDFKGEER. 3 cysteine pairs are disulfide-bonded: Cys50–Cys65, Cys57–Cys70, and Cys64–Cys77. A Leucine amide modification is found at Leu81.

The protein belongs to the neurotoxin 10 (Hwtx-1) family. 14 (Hntx-1) subfamily. As to quaternary structure, monomer. In terms of tissue distribution, expressed by the venom gland.

It is found in the secreted. Functionally, weakly blocks the rat SCN2A/SCN1B (Nav1.2/beta-1) sodium channel (IC(50)=68 uM) and the insect sodium channel para/tipE (IC(50)=4.3 uM), without altering the activation or inactivation kinetics (depressant toxin). This chain is Mu-theraphotoxin-Hhn2b 2, found in Cyriopagopus hainanus (Chinese bird spider).